Here is a 100-residue protein sequence, read N- to C-terminus: Large ribosomal subunit protein uL23 (100 aa).

Belongs to the universal ribosomal protein uL23 family. Part of the 50S ribosomal subunit. Contacts protein L29, and trigger factor when it is bound to the ribosome.

Functionally, one of the early assembly proteins it binds 23S rRNA. One of the proteins that surrounds the polypeptide exit tunnel on the outside of the ribosome. Forms the main docking site for trigger factor binding to the ribosome. The sequence is that of Large ribosomal subunit protein uL23 from Salmonella paratyphi A (strain ATCC 9150 / SARB42).